The chain runs to 256 residues: Pimeloyl-[acyl-carrier protein] methyl ester esterase (256 aa).

An AB hydrolase-1 domain is found at 15–242 (HLVLLHGWGL…AAHAPFISHP (228 aa)). Substrate-binding positions include tryptophan 22, 82–83 (SL), and 143–147 (FLALQ). The active-site Nucleophile is the serine 82. Active-site residues include aspartate 207 and histidine 235. Histidine 235 contributes to the substrate binding site.

It belongs to the AB hydrolase superfamily. Carboxylesterase BioH family. In terms of assembly, monomer.

The protein localises to the cytoplasm. It catalyses the reaction 6-carboxyhexanoyl-[ACP] methyl ester + H2O = 6-carboxyhexanoyl-[ACP] + methanol + H(+). The protein operates within cofactor biosynthesis; biotin biosynthesis. Its function is as follows. The physiological role of BioH is to remove the methyl group introduced by BioC when the pimeloyl moiety is complete. It allows to synthesize pimeloyl-ACP via the fatty acid synthetic pathway through the hydrolysis of the ester bonds of pimeloyl-ACP esters. In Escherichia coli O7:K1 (strain IAI39 / ExPEC), this protein is Pimeloyl-[acyl-carrier protein] methyl ester esterase.